The primary structure comprises 551 residues: Alkaline nuclease (551 aa).

The protein belongs to the herpesviridae alkaline nuclease family. In terms of assembly, interacts with major DNA-binding protein; this interaction increases the nuclease processivity of the alkaline exonuclease.

Its subcellular location is the host nucleus. The protein localises to the host cytoplasm. Its function is as follows. Plays a role in processing non linear or branched viral DNA intermediates in order to promote the production of mature packaged unit-length linear progeny viral DNA molecules. Exhibits endonuclease and exonuclease activities and accepts both double-stranded and single-stranded DNA as substrate. Exonuclease digestion of DNA is in the 5'-&gt; 3' direction and the products are 5'-monophosphate nucleosides. Additionally, forms a recombinase with the major DNA-binding protein, which displays strand exchange activity. The polypeptide is Alkaline nuclease (Homo sapiens (Human)).